Consider the following 401-residue polypeptide: Multidrug resistance protein MdtH (401 aa).

11 helical membrane passes run tyrosine 13 to isoleucine 33, serine 34 to leucine 54, proline 99 to phenylalanine 116, leucine 139 to leucine 159, phenylalanine 165 to leucine 185, valine 214 to valine 234, alanine 243 to isoleucine 263, leucine 277 to leucine 297, threonine 299 to glutamate 319, leucine 340 to glycine 360, and leucine 368 to phenylalanine 388.

Belongs to the major facilitator superfamily. DHA1 family. MdtH (TC 2.A.1.2.21) subfamily.

The protein localises to the cell inner membrane. The protein is Multidrug resistance protein MdtH of Yersinia enterocolitica serotype O:8 / biotype 1B (strain NCTC 13174 / 8081).